Reading from the N-terminus, the 286-residue chain is Shikimate dehydrogenase (NADP(+)) (286 aa).

Residues 20 to 22 (SLS) and serine 67 each bind shikimate. Residue lysine 71 is the Proton acceptor of the active site. Asparagine 92 and aspartate 107 together coordinate shikimate. Residues 131-135 (GGGGA) and alanine 230 contribute to the NADP(+) site. Residue tyrosine 232 coordinates shikimate. NADP(+) is bound at residue glycine 253.

This sequence belongs to the shikimate dehydrogenase family. As to quaternary structure, homodimer.

The enzyme catalyses shikimate + NADP(+) = 3-dehydroshikimate + NADPH + H(+). The protein operates within metabolic intermediate biosynthesis; chorismate biosynthesis; chorismate from D-erythrose 4-phosphate and phosphoenolpyruvate: step 4/7. Functionally, involved in the biosynthesis of the chorismate, which leads to the biosynthesis of aromatic amino acids. Catalyzes the reversible NADPH linked reduction of 3-dehydroshikimate (DHSA) to yield shikimate (SA). The chain is Shikimate dehydrogenase (NADP(+)) from Lactococcus lactis subsp. cremoris (strain SK11).